The sequence spans 208 residues: GTP-binding protein YPTM1 (208 aa).

Residues 15 to 23 (GDSSVGKSC), 33 to 40 (YVDSYIST), 63 to 67 (DTAGQ), 121 to 124 (NKCD), and 151 to 153 (SAK) each bind GTP. Positions 37–45 (YISTIGVDF) match the Effector region motif. Residues 189–208 (QMKGRPIQQEQQKSSRCCST) are disordered. Positions 196 to 208 (QQEQQKSSRCCST) are enriched in polar residues. 2 S-geranylgeranyl cysteine lipidation sites follow: cysteine 205 and cysteine 206.

The protein belongs to the small GTPase superfamily. Rab family. In terms of tissue distribution, low levels in coleoptiles.

It localises to the cell membrane. Its function is as follows. Protein transport. Probably involved in vesicular traffic. In Zea mays (Maize), this protein is GTP-binding protein YPTM1 (YPTM1).